A 506-amino-acid chain; its full sequence is Histidine ammonia-lyase (506 aa).

A cross-link (5-imidazolinone (Ala-Gly)) is located at residues 143-145 (ASG). Position 144 is a 2,3-didehydroalanine (Ser) (S144).

This sequence belongs to the PAL/histidase family. In terms of processing, contains an active site 4-methylidene-imidazol-5-one (MIO), which is formed autocatalytically by cyclization and dehydration of residues Ala-Ser-Gly.

It is found in the cytoplasm. It carries out the reaction L-histidine = trans-urocanate + NH4(+). It participates in amino-acid degradation; L-histidine degradation into L-glutamate; N-formimidoyl-L-glutamate from L-histidine: step 1/3. The chain is Histidine ammonia-lyase from Salmonella choleraesuis (strain SC-B67).